The chain runs to 200 residues: Probable nicotinate-nucleotide adenylyltransferase (200 aa).

Belongs to the NadD family.

The catalysed reaction is nicotinate beta-D-ribonucleotide + ATP + H(+) = deamido-NAD(+) + diphosphate. It functions in the pathway cofactor biosynthesis; NAD(+) biosynthesis; deamido-NAD(+) from nicotinate D-ribonucleotide: step 1/1. Its function is as follows. Catalyzes the reversible adenylation of nicotinate mononucleotide (NaMN) to nicotinic acid adenine dinucleotide (NaAD). This is Probable nicotinate-nucleotide adenylyltransferase from Clavibacter michiganensis subsp. michiganensis (strain NCPPB 382).